Consider the following 61-residue polypeptide: Small ribosomal subunit protein uS14B (61 aa).

Zn(2+) is bound by residues Cys-24, Cys-27, Cys-40, and Cys-43.

Belongs to the universal ribosomal protein uS14 family. Zinc-binding uS14 subfamily. Part of the 30S ribosomal subunit. Contacts proteins S3 and S10. Zn(2+) is required as a cofactor.

Functionally, binds 16S rRNA, required for the assembly of 30S particles and may also be responsible for determining the conformation of the 16S rRNA at the A site. The chain is Small ribosomal subunit protein uS14B from Myxococcus xanthus (strain DK1622).